The following is an 842-amino-acid chain: Glycogen phosphorylase, muscle form (842 aa).

Ser2 carries the N-acetylserine modification. Ser15 is subject to Phosphoserine; by PHK; in form phosphorylase A. Residues Asp43 and Tyr76 each contribute to the AMP site. A phosphotyrosine mark is found at Tyr204 and Tyr227. 310–319 (RRFKSSKFGS) contributes to the AMP binding site. Ser430 is subject to Phosphoserine. Tyr473 carries the post-translational modification Phosphotyrosine. Ser514 is subject to Phosphoserine. An N6-(pyridoxal phosphate)lysine modification is found at Lys681. A phosphoserine mark is found at Ser747 and Ser748.

Belongs to the glycogen phosphorylase family. In terms of assembly, homodimer. Homotetramer; to form the enzymatically active phosphorylase A. Pyridoxal 5'-phosphate serves as cofactor. Phosphorylation of Ser-15 converts phosphorylase B (unphosphorylated) to phosphorylase A.

The enzyme catalyses [(1-&gt;4)-alpha-D-glucosyl](n) + phosphate = [(1-&gt;4)-alpha-D-glucosyl](n-1) + alpha-D-glucose 1-phosphate. Its activity is regulated as follows. Allosterically regulated through the non-covalent binding of metabolites, being activated by AMP and inhibited by ATP, ADP, and glucose-6-phosphate. The activity is also controlled by post-translational modifications including phosphorylation. Its function is as follows. Allosteric enzyme that catalyzes the rate-limiting step in glycogen catabolism, the phosphorolytic cleavage of glycogen to produce glucose-1-phosphate, and plays a central role in maintaining cellular and organismal glucose homeostasis. The chain is Glycogen phosphorylase, muscle form from Mus musculus (Mouse).